The chain runs to 317 residues: Large ribosomal subunit protein uL10 (317 aa).

The span at 280-290 shows a compositional bias: low complexity; that stretch reads SASAAPAAGGA. The disordered stretch occupies residues 280–317; sequence SASAAPAAGGATEKKEEAKKPESESEEEDDDMGFGLFD. Over residues 291–302 the composition is skewed to basic and acidic residues; the sequence is TEKKEEAKKPES. At Ser-302 the chain carries Phosphoserine. Ser-304 bears the Phosphoserine; by CK1 mark.

Belongs to the universal ribosomal protein uL10 family. P0 forms a pentameric complex by interaction with dimers of P1 and P2.

Its subcellular location is the cytoplasm. It is found in the nucleus. Ribosomal protein P0 is the functional equivalent of E.coli protein L10. This chain is Large ribosomal subunit protein uL10 (RpLP0), found in Drosophila melanogaster (Fruit fly).